Consider the following 359-residue polypeptide: Archaemetzincin-2 (359 aa).

His-254 contacts Zn(2+). Glu-255 serves as the catalytic Proton acceptor. His-258, His-264, Cys-265, Cys-270, Cys-289, and Cys-292 together coordinate Zn(2+).

Belongs to the peptidase M54 family. Zn(2+) serves as cofactor.

Probable zinc metalloprotease. This chain is Archaemetzincin-2 (Amz2), found in Rattus norvegicus (Rat).